Here is a 165-residue protein sequence, read N- to C-terminus: Lipoprotein signal peptidase (165 aa).

A run of 2 helical transmembrane segments spans residues 68–88 and 100–120; these read PLLP…GLFG and GFLL…GEVI. Active-site residues include aspartate 121 and aspartate 137. The helical transmembrane segment at 130 to 150 threads the bilayer; the sequence is FPVFNIADISINVGLACLIFA.

The protein belongs to the peptidase A8 family.

Its subcellular location is the cell inner membrane. The enzyme catalyses Release of signal peptides from bacterial membrane prolipoproteins. Hydrolyzes -Xaa-Yaa-Zaa-|-(S,diacylglyceryl)Cys-, in which Xaa is hydrophobic (preferably Leu), and Yaa (Ala or Ser) and Zaa (Gly or Ala) have small, neutral side chains.. Its pathway is protein modification; lipoprotein biosynthesis (signal peptide cleavage). This protein specifically catalyzes the removal of signal peptides from prolipoproteins. This is Lipoprotein signal peptidase from Acaryochloris marina (strain MBIC 11017).